Here is a 347-residue protein sequence, read N- to C-terminus: Beta carbonic anhydrase 1, chloroplastic (347 aa).

Residues 1–113 (MSTAPLSGFF…AAAKVEQITA (113 aa)) constitute a chloroplast transit peptide. A114 is modified (N-acetylalanine). The residue at position 175 (S175) is a Phosphoserine. The residue at position 203 (Y203) is a Phosphotyrosine. A Phosphoserine modification is found at S266. Position 280 is an S-nitrosocysteine (C280).

It belongs to the beta-class carbonic anhydrase family. In terms of assembly, homohexamer. In terms of processing, S-nitrosylation at Cys-280 is up-regulated during nitrosative burst and suppresses both binding of salicylic acid and carbonic anhydrase activity. S-nitrosylated in response to an avirulent but not to a virulent bacterial strain. As to expression, strongly expressed in aerial tissues including leaves, stems, flowers and siliques. Accumulates in both guard cells and mesophyll cells.

The protein localises to the plastid. Its subcellular location is the chloroplast stroma. It is found in the cell membrane. The enzyme catalyses hydrogencarbonate + H(+) = CO2 + H2O. Reversible hydration of carbon dioxide. Required for photosynthesis in cotyledons. Binds salicylic acid. Together with BCA4, involved in the CO(2) signaling pathway which controls gas-exchange between plants and the atmosphere by modulating stomatal development and movements. Promotes water use efficiency. The sequence is that of Beta carbonic anhydrase 1, chloroplastic from Arabidopsis thaliana (Mouse-ear cress).